We begin with the raw amino-acid sequence, 541 residues long: Cytochrome P450 monooxygenase claW (541 aa).

The chain crosses the membrane as a helical span at residues 12–32; sequence VINALVILFSFWAFLSLIRVI. Cys480 lines the heme pocket.

This sequence belongs to the cytochrome P450 family. Requires heme as cofactor.

Its subcellular location is the membrane. Its pathway is secondary metabolite biosynthesis; terpenoid biosynthesis. Functionally, cytochrome P450 monooxygenase; part of the gene cluster that mediates the biosynthesis of clavilactone A, a meroterpenoid that features a unique benzo-fused ten-membered carbocyclic ring unit with an alpha,beta-epoxy-gamma-lactone moiety, forming an intriguing 10/5/3 tricyclic nested skeleton. Cytochrome P450 monooxygenases claO, claP, claQ, claU, and claW are close orthologs, suggesting that a redundant function or pseudogenes are present in the cla cluster. These monoxygenases are not involved in clavilactone A biosynthesis nor its modification. ClaR, ClaS and ClaT are sufficient to produce clavilactone A. The biosynthesis begins with the prenyltransferase claS that transfers geranyl pyrophosphate (GPP) to hydroquinone to produces geranylhydroquinone. The cytochrome P450 monooxygenase claR then catalyzes the diradical coupling reaction between the intramolecular hydroquinone and allyl moieties to form the benzo-fused ten-membered carbocyclic ring unit of wigantol. Finally the cytochrome P450 monooxygenase claT exquisitely and stereoselectively assembles the alpha,beta-epoxy-gamma-lactone moiety, producing clavilactone A via arnebinol A. This Ampulloclitocybe clavipes (Club foot) protein is Cytochrome P450 monooxygenase claW.